Consider the following 162-residue polypeptide: Phenazine biosynthesis protein PhzA2 (162 aa).

Belongs to the PhzA/PhzB family.

The protein operates within antibiotic biosynthesis; phenazine biosynthesis. Involved in the biosynthesis of the antibiotic phenazine, a nitrogen-containing heterocyclic molecule having important roles in virulence, competition and biological control. PhzA2 (operon phzA2B2C2E2F2G2) has a role in the biosynthesis of the phenazine during both planktonic growth and biofilm development, and in host infection during biofilm development. The protein is Phenazine biosynthesis protein PhzA2 of Pseudomonas aeruginosa (strain ATCC 15692 / DSM 22644 / CIP 104116 / JCM 14847 / LMG 12228 / 1C / PRS 101 / PAO1).